Here is a 139-residue protein sequence, read N- to C-terminus: Transcription factor E (139 aa).

The region spanning 7–91 (IINKKQDEVS…DYEKILDTLL (85 aa)) is the HTH TFE/IIEalpha-type domain.

Belongs to the TFE family. Monomer. Interaction with RNA polymerase subunits RpoF and RpoE is necessary for Tfe stimulatory transcription activity. Able to interact with Tbp and RNA polymerase in the absence of DNA promoter. Interacts both with the preinitiation and elongation complexes.

Transcription factor that plays a role in the activation of archaeal genes transcribed by RNA polymerase. Facilitates transcription initiation by enhancing TATA-box recognition by TATA-box-binding protein (Tbp), and transcription factor B (Tfb) and RNA polymerase recruitment. Not absolutely required for transcription in vitro, but particularly important in cases where Tbp or Tfb function is not optimal. It dynamically alters the nucleic acid-binding properties of RNA polymerases by stabilizing the initiation complex and destabilizing elongation complexes. Seems to translocate with the RNA polymerase following initiation and acts by binding to the non template strand of the transcription bubble in elongation complexes. The sequence is that of Transcription factor E from Nanoarchaeum equitans (strain Kin4-M).